Consider the following 188-residue polypeptide: Elongation factor P-like protein (188 aa).

This sequence belongs to the elongation factor P family.

The sequence is that of Elongation factor P-like protein from Aliivibrio fischeri (strain ATCC 700601 / ES114) (Vibrio fischeri).